The following is a 117-amino-acid chain: Large ribosomal subunit protein bL20c (117 aa).

It belongs to the bacterial ribosomal protein bL20 family.

The protein localises to the plastid. The protein resides in the chloroplast. Functionally, binds directly to 23S ribosomal RNA and is necessary for the in vitro assembly process of the 50S ribosomal subunit. It is not involved in the protein synthesizing functions of that subunit. The sequence is that of Large ribosomal subunit protein bL20c from Nasturtium officinale (Watercress).